The following is a 763-amino-acid chain: MAP7 domain-containing protein 2 (763 aa).

Positions 1-11 (MERGGGGGFGT) are enriched in gly residues. Disordered regions lie at residues 1-63 (MERG…KERR), 96-124 (WRKLEEQRQREDQKRAAVEEKRKQKLREE), 149-268 (SWGA…DVGK), and 300-540 (PLRR…KQKE). Over residues 52–63 (SGERQRLAKERR) the composition is skewed to basic and acidic residues. Residues 54–147 (ERQRLAKERR…RTQQLELKKK (94 aa)) are a coiled coil. The segment covering 192–206 (ESTNACDKLSTSTMS) has biased composition (polar residues). 3 stretches are compositionally biased toward basic and acidic residues: residues 355–371 (MPKRKAEKEKSNKEREG), 385–400 (ALEKHVVDKHASEKHA), and 430–540 (LAEK…KQKE).

The protein belongs to the MAP7 family. Interacts (via N-terminus) with microtubules; facilitates microtubule stabilization. Interacts with kinesin-1 family members, KIF5A, KIF5B and KIF5C.

The protein localises to the cytoplasm. It is found in the cytoskeleton. Its subcellular location is the microtubule organizing center. The protein resides in the centrosome. It localises to the midbody. The protein localises to the cell projection. It is found in the neuron projection. Its subcellular location is the axon. Functionally, microtubule-stabilizing protein involved in the control of cell motility and neurite outgrowth. Acts as a critical cofactor for kinesin transport; in the proximal axon regulates kinesin-1 family members, KIF5A, KIF5B and KIF5C recruitment to microtubules and contributes to kinesin-1-mediated transport in the axons. The polypeptide is MAP7 domain-containing protein 2 (MAP7D2) (Pongo abelii (Sumatran orangutan)).